A 208-amino-acid polypeptide reads, in one-letter code: Thymidylate kinase (208 aa).

10 to 17 (GLEGAGKS) is an ATP binding site.

The protein belongs to the thymidylate kinase family.

It carries out the reaction dTMP + ATP = dTDP + ADP. Phosphorylation of dTMP to form dTDP in both de novo and salvage pathways of dTTP synthesis. This Glaesserella parasuis serovar 5 (strain SH0165) (Haemophilus parasuis) protein is Thymidylate kinase.